The following is a 609-amino-acid chain: Large ribosomal subunit assembly factor BipA (609 aa).

The 196-residue stretch at 3 to 198 (QNIRNIAIIA…AIIKYAPAPN (196 aa)) folds into the tr-type G domain. GTP is bound by residues 15 to 20 (DHGKTT) and 128 to 131 (NKID).

The protein belongs to the TRAFAC class translation factor GTPase superfamily. Classic translation factor GTPase family. BipA subfamily. In terms of assembly, monomer.

It is found in the cytoplasm. It catalyses the reaction GTP + H2O = GDP + phosphate + H(+). In terms of biological role, a 50S ribosomal subunit assembly protein with GTPase activity, required for 50S subunit assembly at low temperatures, may also play a role in translation. Binds GTP and analogs. Binds the 70S ribosome between the 30S and 50S subunits, in a similar position as ribosome-bound EF-G; it contacts a number of ribosomal proteins, both rRNAs and the A-site tRNA. The protein is Large ribosomal subunit assembly factor BipA of Buchnera aphidicola subsp. Schizaphis graminum (strain Sg).